A 343-amino-acid polypeptide reads, in one-letter code: F17c-G fimbrial adhesin (343 aa).

The N-terminal stretch at 1–22 is a signal peptide; sequence MTNFYKVFLAVFILVCCNISHA. The receptor-binding lectin domain stretch occupies residues 23–199; the sequence is AVSFIGSTEN…LNPFTLNDTV (177 aa). Residues 65–66, 110–111, and 138–141 contribute to the a carbohydrate site; these read AN, DT, and STQG. An intrachain disulfide couples cysteine 75 to cysteine 132. The segment at 200 to 343 is fimbrillin-binding domain; the sequence is TSCRLLTPSA…GISTFTFSYQ (144 aa). The segment at 287–307 is disordered; that stretch reads LKFGPDSPVKGNENQWQLSTG. Positions 298–307 are enriched in polar residues; that stretch reads NENQWQLSTG.

This sequence belongs to the fimbrial protein family.

The protein resides in the fimbrium. Functionally, essential fimbrial adhesion factor that mediates binding to N-acetylglucosamine-containing receptors in the host intestinal microvilli, leading to colonization of the intestinal tissue, and diarrhea or septicemia. Also confers adhesiveness to laminin and basement membranes. The chain is F17c-G fimbrial adhesin (f17cG) from Escherichia coli.